Consider the following 403-residue polypeptide: Serine/threonine-protein phosphatase 4 regulatory subunit 2-A (403 aa).

3 stretches are compositionally biased toward polar residues: residues 140–149 (EKNNSTSLNR), 156–170 (PSNS…NVNG), and 183–196 (SLSS…LPDS). The disordered stretch occupies residues 140 to 403 (EKNNSTSLNR…DAPEEPMEQD (264 aa)). Positions 197-211 (TENKESDLQQKEKSQ) are enriched in basic and acidic residues. Polar residues-rich tracts occupy residues 212–226 (SDSA…ATTS) and 371–387 (ATSS…SPME). Acidic residues predominate over residues 388–403 (NSEEATDAPEEPMEQD).

Belongs to the PPP4R2 family. As to quaternary structure, serine/threonine-protein phosphatase 4 (PP4) occurs in different assemblies of the catalytic and one or more regulatory subunits.

In terms of biological role, regulatory subunit of serine/threonine-protein phosphatase 4 (PP4). This is Serine/threonine-protein phosphatase 4 regulatory subunit 2-A (ppp4r2-a) from Xenopus laevis (African clawed frog).